Consider the following 458-residue polypeptide: Ig mu chain C region secreted form (458 aa).

Positions 1-106 (VSLSSPTLYP…SNRDLRVSFP (106 aa)) are CH1. A disulfide bond links Cys-28 and Cys-90. N-linked (GlcNAc...) asparagine glycans are attached at residues Asn-46 and Asn-114. Residues 107-222 (VDSELPPNVS…VSMSSECSTT (116 aa)) form a CH2 region. A disulfide bond links Cys-137 and Cys-200. Residues Asn-212, Asn-261, Asn-277, and Asn-284 are each glycosylated (N-linked (GlcNAc...) asparagine). The tract at residues 223-327 (PSPGIQVFPI…PLKHTISKSR (105 aa)) is CH3. 2 disulfide bridges follow: Cys-249–Cys-308 and Cys-356–Cys-418. The interval 328–458 (EVAKHPPAVY…IMSDTASTCY (131 aa)) is CH4. Residue Asn-445 is glycosylated (N-linked (GlcNAc...) asparagine).

The protein localises to the secreted. The polypeptide is Ig mu chain C region secreted form (Oryctolagus cuniculus (Rabbit)).